We begin with the raw amino-acid sequence, 183 residues long: Ribosome-recycling factor (183 aa).

The protein belongs to the RRF family.

It is found in the cytoplasm. In terms of biological role, responsible for the release of ribosomes from messenger RNA at the termination of protein biosynthesis. May increase the efficiency of translation by recycling ribosomes from one round of translation to another. The protein is Ribosome-recycling factor of Afipia carboxidovorans (strain ATCC 49405 / DSM 1227 / KCTC 32145 / OM5) (Oligotropha carboxidovorans).